An 83-amino-acid polypeptide reads, in one-letter code: U-actitoxin-Aeq6b (83 aa).

A signal peptide spans 1 to 20; sequence MIYKAVFVCLVLVLLGDVFC. A propeptide spanning residues 21 to 36 is cleaved from the precursor; it reads SPRNSGGGTLNDNPFE. Residue Pro82 is modified to Proline amide.

Post-translationally, contains 3 disulfide bonds. As to expression, expressed by acrorhagi.

Its subcellular location is the secreted. It is found in the nematocyst. Toxin. In Actinia equina (Beadlet anemone), this protein is U-actitoxin-Aeq6b.